Reading from the N-terminus, the 365-residue chain is Peptide chain release factor 2 (365 aa).

N5-methylglutamine is present on Gln252.

It belongs to the prokaryotic/mitochondrial release factor family. Methylated by PrmC. Methylation increases the termination efficiency of RF2.

The protein localises to the cytoplasm. In terms of biological role, peptide chain release factor 2 directs the termination of translation in response to the peptide chain termination codons UGA and UAA. The polypeptide is Peptide chain release factor 2 (Aliivibrio fischeri (strain ATCC 700601 / ES114) (Vibrio fischeri)).